A 73-amino-acid polypeptide reads, in one-letter code: Putative antitoxin M1627_0365 (73 aa).

It belongs to the UPF0330 family.

Possibly the antitoxin component of a type II toxin-antitoxin (TA) system. The chain is Putative antitoxin M1627_0365 from Saccharolobus islandicus (strain M.16.27) (Sulfolobus islandicus).